Reading from the N-terminus, the 593-residue chain is Glutamate decarboxylase 1 (593 aa).

Low complexity predominate over residues 1–12 (MASSTPSPATSS). The interval 1–22 (MASSTPSPATSSNAGADPNTTN) is disordered. Residue serine 77 is modified to Phosphoserine. Residue 189 to 191 (QLS) participates in 4-aminobutanoate binding. The residue at position 404 (lysine 404) is an N6-(pyridoxal phosphate)lysine. A 4-aminobutanoate-binding site is contributed by arginine 566.

Belongs to the group II decarboxylase family. As to quaternary structure, homodimer. The cofactor is pyridoxal 5'-phosphate.

It catalyses the reaction L-glutamate + H(+) = 4-aminobutanoate + CO2. In terms of biological role, catalyzes the synthesis of the inhibitory neurotransmitter gamma-aminobutyric acid (GABA) with pyridoxal 5'-phosphate as cofactor. The polypeptide is Glutamate decarboxylase 1 (Gad1) (Mus musculus (Mouse)).